The chain runs to 236 residues: Small ribosomal subunit protein uS2c (236 aa).

It belongs to the universal ribosomal protein uS2 family.

It localises to the plastid. The protein resides in the chloroplast. The protein is Small ribosomal subunit protein uS2c (rps2) of Piper cenocladum (Ant piper).